Reading from the N-terminus, the 679-residue chain is Stress-70 protein, mitochondrial (679 aa).

Residues 1-46 (MISASRAVAARLVGAAASRGPTAARHQDGWNGLSHEAFRIVSRRDY) constitute a mitochondrion transit peptide. Positions 1 to 432 (MISASRAVAA…IQGGVLAGDV (432 aa)) are interaction with NFS1. 2 residues coordinate ADP: threonine 63 and asparagine 64. The tract at residues 63-431 (TNSCVAVMEG…AIQGGVLAGD (369 aa)) is nucleotide-binding domain (NBD). Residue lysine 76 is modified to N6-acetyllysine. Threonine 87 carries the phosphothreonine modification. 2 positions are modified to N6-acetyllysine; alternate: lysine 135 and lysine 138. 2 positions are modified to N6-succinyllysine; alternate: lysine 135 and lysine 138. Residue lysine 143 is modified to N6-acetyllysine. The residue at position 206 (lysine 206) is an N6-acetyllysine; alternate. Lysine 206 is modified (N6-succinyllysine; alternate). Position 206 is an N6-malonyllysine; alternate (lysine 206). N6-acetyllysine is present on residues lysine 234 and lysine 288. Lysine 300 is subject to N6-acetyllysine; alternate. An N6-succinyllysine; alternate modification is found at lysine 300. Positions 313, 316, and 320 each coordinate ADP. Lysine 368 carries the post-translational modification N6-succinyllysine. Glycine 388 and arginine 391 together coordinate ADP. Lysine 394 carries the post-translational modification N6-succinyllysine. Serine 408 bears the Phosphoserine mark. Residues 432–441 (VTDVLLLDVT) form an interdomain linker region. An interaction with FXN and ISCU region spans residues 432-679 (VTDVLLLDVT…QKEDQKEEKQ (248 aa)). The segment at 442–679 (PLSLGIETLG…QKEDQKEEKQ (238 aa)) is substrate-binding domain (SBD). Arginine 513 carries the omega-N-methylarginine modification. N6-acetyllysine; alternate is present on residues lysine 567 and lysine 600. An N6-succinyllysine; alternate mark is found at lysine 567 and lysine 600. The residue at position 610 (lysine 610) is an N6-succinyllysine. Lysine 612 carries the post-translational modification N6-acetyllysine. Residue lysine 646 is modified to N6-acetyllysine; alternate. N6-succinyllysine; alternate is present on lysine 646. The disordered stretch occupies residues 656–679 (ASEREGSGSSGTGEQKEDQKEEKQ). Residues 669 to 679 (EQKEDQKEEKQ) show a composition bias toward basic and acidic residues.

The protein belongs to the heat shock protein 70 family. In terms of assembly, interacts strongly with the intermediate form of FXN and weakly with its mature form. Interacts with HSCB. Associates with the mitochondrial contact site and cristae organizing system (MICOS) complex, composed of at least MICOS10/MIC10, CHCHD3/MIC19, CHCHD6/MIC25, APOOL/MIC27, IMMT/MIC60, APOO/MIC23/MIC26 and QIL1/MIC13. This complex was also known under the names MINOS or MitOS complex. The MICOS complex associates with mitochondrial outer membrane proteins SAMM50, MTX1, MTX2 and DNAJC11, mitochondrial inner membrane protein TMEM11 and with HSPA9. Interacts with DNLZ, the interaction is required to prevent self-aggregation. Interacts with TESPA1. Interacts with PDPN. Interacts with NFU1, NFS1 and ISCU. Interacts with TP53; the interaction promotes TP53 degradation. Interacts (via SBD domain) with UBXN2A; the interaction with UBXN2A inhibits HSPA9/MOT-2 interaction with and degradation of TP53, thereby promotes TP53 translocation to the nucleus. Interacts with ITPR1 AND VDAC1; this interaction couples ITPR1 to VDAC1. Component of the TIM23 mitochondrial inner membrane pre-sequence translocase complex.

It is found in the mitochondrion. The protein localises to the nucleus. It localises to the nucleolus. The protein resides in the cytoplasm. Its subcellular location is the mitochondrion matrix. The enzyme catalyses ATP + H2O = ADP + phosphate + H(+). Its activity is regulated as follows. The chaperone activity is regulated by ATP-induced allosteric coupling of the nucleotide-binding (NBD) and substrate-binding (SBD) domains. ATP binding in the nucleotide-binding pocket (NBP) leads to a conformational change in the NBD, which is transferred through the interdomain linker (IDL) to the substrate-binding domain (SBD). This elicits a reduced substrate affinity and a faster substrate exchange rate. Upon hydrolysis of ATP to ADP, the protein undergoes a conformational change that increases its affinity for substrate proteins. It cycles through repeated phases of ATP hydrolysis and nucleotide exchange, facilitating repeated cycles of substrate binding and release. Functions in collaboration with co-chaperones. Functions with the co-chaperone, DNLZ, to maintain solubility and regulate ATP hydrolysis. Nucleotide exchange factors, GRPEL1 and GRPEL2, accelerate nucleotide exchange. In terms of biological role, mitochondrial chaperone that plays a key role in mitochondrial protein import, folding, and assembly. Plays an essential role in the protein quality control system, the correct folding of proteins, the re-folding of misfolded proteins, and the targeting of proteins for subsequent degradation. These processes are achieved through cycles of ATP binding, ATP hydrolysis, and ADP release, mediated by co-chaperones. In mitochondria, it associates with the TIM (translocase of the inner membrane) protein complex to assist in the import and folding of mitochondrial proteins. Plays an important role in mitochondrial iron-sulfur cluster (ISC) biogenesis, interacts with and stabilizes ISC cluster assembly proteins FXN, NFU1, NFS1 and ISCU. Regulates erythropoiesis via stabilization of ISC assembly. Regulates mitochondrial calcium-dependent apoptosis by coupling two calcium channels, ITPR1 and VDAC1, at the mitochondria-associated endoplasmic reticulum (ER) membrane to facilitate calcium transport from the ER lumen to the mitochondria intermembrane space, providing calcium for the downstream calcium channel MCU, which releases it into the mitochondrial matrix. Although primarily located in the mitochondria, it is also found in other cellular compartments. In the cytosol, it associates with proteins involved in signaling, apoptosis, or senescence. It may play a role in cell cycle regulation via its interaction with and promotion of degradation of TP53. May play a role in the control of cell proliferation and cellular aging. Protects against reactive oxygen species (ROS). Extracellular HSPA9 plays a cytoprotective role by preventing cell lysis following immune attack by the membrane attack complex by disrupting formation of the complex. The protein is Stress-70 protein, mitochondrial of Pongo abelii (Sumatran orangutan).